A 303-amino-acid polypeptide reads, in one-letter code: Cyclin-dependent kinase 4 (303 aa).

Position 2 is an N-acetylalanine (Ala-2). The Protein kinase domain maps to 6–295 (YEPVAEIGVG…AFRALQHSYL (290 aa)). Residues 12–20 (IGVGAYGTV) and Lys-35 contribute to the ATP site. Residues 50-56 (PISTVRE) are required for binding D-type cyclins. Residue Asp-140 is the Proton acceptor of the active site. Thr-172 carries the phosphothreonine; by CAK modification.

The protein belongs to the protein kinase superfamily. CMGC Ser/Thr protein kinase family. CDC2/CDKX subfamily. Component of the D-CDK4 complex, composed of CDK4 and some D-type G1 cyclin (CCND1, CCND2 or CCND3). Interacts directly in the complex with CCND1, CCND2 or CCND3. Interacts with SEI1 and ZNF655. Forms a ternary complex, cyclin D-CDK4-CDKN1B, involved in modulating CDK4 enzymatic activity. Interacts directly with CDKN1B (phosphorylated on 'Tyr-88' and 'Tyr-89'); the interaction allows assembly of the cyclin D-CDK4 complex, Thr-172 phosphorylation, nuclear translocation and enhances the cyclin D-CDK4 complex activity. CDK4 activity is either inhibited or enhanced depending on stoichiometry of complex. The non-tyrosine-phosphorylated form of CDKN1B prevents T-loop phosphorylation of CDK4 producing inactive CDK4. Interacts (unphosphorylated form) with CDK2. Also forms ternary complexes with CDKN1A or CDKN2A. Interacts directly with CDKN1A (via its N-terminal); the interaction promotes the assembly of the cyclin D-CDK4 complex, its nuclear translocation and promotes the cyclin D-dependent enzyme activity of CDK4. Interacts with CCND1; the interaction is prevented with the binding of CCND1 to INSM1 during cell cycle progression. Probably forms a complex composed of chaperones HSP90 and HSP70, co-chaperones CDC37, PPP5C, TSC1 and client protein TSC2, CDK4, AKT, RAF1 and NR3C1; this complex does not contain co-chaperones STIP1/HOP and PTGES3/p23. Interacts with CEBPA (when phosphorylated). Interacts with FNIP1 and FNIP2. Phosphorylation at Thr-172 is required for enzymatic activity. Phosphorylated, in vitro, at this site by CCNH-CDK7, but, in vivo, appears to be phosphorylated by a proline-directed kinase. In the cyclin D-CDK4-CDKN1B complex, this phosphorylation and consequent CDK4 enzyme activity, is dependent on the tyrosine phosphorylation state of CDKN1B. Thus, in proliferating cells, CDK4 within the complex is phosphorylated on Thr-172 in the T-loop. In resting cells, phosphorylation on Thr-172 is prevented by the non-tyrosine-phosphorylated form of CDKN1B.

The protein localises to the cytoplasm. Its subcellular location is the nucleus. It is found in the nucleus membrane. The enzyme catalyses L-seryl-[protein] + ATP = O-phospho-L-seryl-[protein] + ADP + H(+). It catalyses the reaction L-threonyl-[protein] + ATP = O-phospho-L-threonyl-[protein] + ADP + H(+). Its activity is regulated as follows. Both phosphorylation at Thr-172 and binding of a D-type cyclin are necessary for enzymatic activity. Full activation of the cyclin-D-CDK4 complex appears to require other factors such as recruitment of the substrate via a substrate recruitment motif, and/or formation of the CDKN1B ternary complex. Inhibited by INK4 family members. In resting cells, the non-tyrosine-phosphorylated form of CDKN1B prevents phosphorylation at Thr-172 and inactivation, while, in proliferating cells, tyrosine phosphorylation of CDKN1B allows phosphorylation of Thr-172 of CDK4 and subsequent activation. Functionally, ser/Thr-kinase component of cyclin D-CDK4 (DC) complexes that phosphorylate and inhibit members of the retinoblastoma (RB) protein family including RB1 and regulate the cell-cycle during G(1)/S transition. Phosphorylation of RB1 allows dissociation of the transcription factor E2F from the RB/E2F complexes and the subsequent transcription of E2F target genes which are responsible for the progression through the G(1) phase. Hypophosphorylates RB1 in early G(1) phase. Cyclin D-CDK4 complexes are major integrators of various mitogenenic and antimitogenic signals. Also phosphorylates SMAD3 in a cell-cycle-dependent manner and represses its transcriptional activity. Component of the ternary complex, cyclin D/CDK4/CDKN1B, required for nuclear translocation and activity of the cyclin D-CDK4 complex. This chain is Cyclin-dependent kinase 4 (CDK4), found in Bos taurus (Bovine).